The primary structure comprises 252 residues: MDKLLIVNADDFGLSKGQNYGIVEACRHGVVASTTAMVNGEAVEHAAALSRELPGLGVGMHFVLTLGMPLSPMPGLTRSGQLGKWIWQMAEQGTLPLDEIARELDCQFNRFVDLFGREPTHIDSHHHVHMIPAIFPLVAQFAARKGVAMRVDRQVQASHDLTLSRAPTTQGYSSDFYGDEISETLFLQVLDASAARGEQSFEMMAHPAFVDNTVRKSAYCWSRLAELDVLTSPSLKYAIAERGYRLGSFLDL.

Residues His-61 and His-125 each coordinate Mg(2+).

This sequence belongs to the YdjC deacetylase family. ChbG subfamily. In terms of assembly, homodimer. Mg(2+) is required as a cofactor.

The protein resides in the cytoplasm. It catalyses the reaction N,N'-diacetylchitobiose + H2O = N-acetyl-beta-D-glucosaminyl-(1-&gt;4)-D-glucosamine + acetate. It carries out the reaction diacetylchitobiose-6'-phosphate + H2O = N'-monoacetylchitobiose-6'-phosphate + acetate. Its pathway is glycan degradation; chitin degradation. Functionally, involved in the degradation of chitin. ChbG is essential for growth on the acetylated chitooligosaccharides chitobiose and chitotriose but is dispensable for growth on cellobiose and chitosan dimer, the deacetylated form of chitobiose. Deacetylation of chitobiose-6-P and chitotriose-6-P is necessary for both the activation of the chb promoter by the regulatory protein ChbR and the hydrolysis of phosphorylated beta-glucosides by the phospho-beta-glucosidase ChbF. Catalyzes the removal of only one acetyl group from chitobiose-6-P to yield monoacetylchitobiose-6-P, the inducer of ChbR and the substrate of ChbF. This Enterobacter sp. (strain 638) protein is Chitooligosaccharide deacetylase.